Here is a 155-residue protein sequence, read N- to C-terminus: Deoxyuridine 5'-triphosphate nucleotidohydrolase (155 aa).

Substrate-binding positions include 74-76, Asn87, and 91-93; these read RSG and LID.

It belongs to the dUTPase family. The cofactor is Mg(2+).

The catalysed reaction is dUTP + H2O = dUMP + diphosphate + H(+). The protein operates within pyrimidine metabolism; dUMP biosynthesis; dUMP from dCTP (dUTP route): step 2/2. In terms of biological role, this enzyme is involved in nucleotide metabolism: it produces dUMP, the immediate precursor of thymidine nucleotides and it decreases the intracellular concentration of dUTP so that uracil cannot be incorporated into DNA. The polypeptide is Deoxyuridine 5'-triphosphate nucleotidohydrolase (Xylella fastidiosa (strain M12)).